We begin with the raw amino-acid sequence, 791 residues long: Cellobionic acid phosphorylase (791 aa).

Asp-478 (proton donor) is an active-site residue.

This sequence belongs to the glycosyl hydrolase 94 family. Cellobionic acid phosphorylase subfamily. As to quaternary structure, homodimer.

It carries out the reaction 4-O-beta-D-glucopyranosyl-D-gluconate + phosphate = D-gluconate + alpha-D-glucose 1-phosphate. It participates in glycan metabolism; cellulose degradation. Catalyzes the reversible phosphorolysis of cellobionic acid (4-O-beta-D-glucopyranosyl-D-gluconate), a probable step in cellulose degradation. May be part of a metabolic pathway where cellobionic acid is converted into alpha-D-glucose 1-phosphate and D-gluconic acid to enter glycolysis and the pentose phosphate pathway, respectively. Produces 4-O-beta-D-glucopyranosyl-D-glucuronate from alpha-D-glucose 1-phosphate and D-glucuronate with low activity in the synthetic direction. This is Cellobionic acid phosphorylase from Neurospora crassa (strain ATCC 24698 / 74-OR23-1A / CBS 708.71 / DSM 1257 / FGSC 987).